The chain runs to 1488 residues: MSNPMFPEKWEESSTSKSSRRVHKRRERKMWKKPIKLSRFPSFGFSGSDFTLDQIPAIFSGYTAESEDSSSSEMSDDSRTYSKSSDENEELDQERPRSVKRRAKSKSISRISSMKVLRRQSTRTLYGAGQRLKKMRSMKRLTSNSRQILRKKNLDRGDFGLLQPHYLRPTSSSASKNVENNQKNLGAARLKRIASLRYNGLLKATCSSAMKGSSSKRSNDVCTYRYCSLHGRRHSHAADNNAGVPSLKRFVSMRRKFMNRQKSVNRRLVLLKRTLSRKRGPLGGRVVTDQESKEVDDNVDGDSDEEVFEEEVSSSVDGGNDNESIGRSSETVMVDVDDNVDRGMDAMETVASKVQESKTETVGATLWRAICEQTVTGHDHDDGKVDGTTSDGTVGDNEEVCREGSSGELREEDGKKTEYVWNETVTLVKQAFDEILAEITDDDSSDDISMTKDEALEVGLGEEDVGADSSDSSCSDMQPVIERDTHLSVIASTFHMRDEFGHQRGPKKWSYLKRVILLKRFLKSLDRKERRKLSDGKESETIMRLRRELVGERKNAEEWMLDHALRQVISTLAPSQKKKVKHLVKAFESLIPMDGGSRGHDDLVSPAREENETVNSQTQTILRDNKDATDILEVSPAKDLEETNLTCEASSFLSIDMKSDEENETVNSPTIWRDNEDTTDLLEVVPAKDLEETNLTSESSSSLCIGMKSDEALESTADASLCNHLAVEEEVDGLALGSFIEEEEKKGESEKQNLSTWRNLIQKHMVMRDNSEGNRNETEQEHKWSYGTDQMTGIDDANAAAVKSIQLAFETILSEIPDSSSDEESVSESSNSLKEEKEHQGETKRSWNSLRKVILLKRFVKSLEKVQVPNPRKMRNLPVESAFEAENVFLRHRSIMEGTRTEGEEMMLDYALRQAISRLAPIQRKKVDLLVQAFDIVLDGHDTPKQTKNSDTPRNNDETKEGKPRVEEGCEVNKDEQKIKNVFARFQVHQKDLKGEEEVHNTPKESRNLPPIRNFKQRIVVEKGKDSRMWKLIYKHMVTEKEGIDSANAESVASVESEYDDEAGGLQIDARRSGTVTLVREALEKILSEIPDNSSDDQSMDSDITTEQELFERNSQVSEEKSEVSSATFKPKFTEKRVKGWNNVKKVILLKRFVSDLGSLTRLSPKTPRVLPWEPDPETEKIRLRHQEIGGKRNSEEWMLDYALRQAISTLAPSQKRKVSLLAQAFDTISLQDMGSGSTPGSAASSRNISRQSSISSMAAHYENEANAEIIRGKLRNLQEDLKESAKLDGVSKDLEEKQQCSSLWRILCKQMEDNEKNQTLPEETRKEEEEEELKEDTSVDGEKMELYQTEAVELLGEVIDGISLEESQDQNLNNEETRQKSETLQVSKVRIDRWSNLKRAILLRRFVKALENVRKFNPREPRFLPPNPEVEAEKVNLRHQETQNKKNGDEWMVDNALQGVVSKLTPARKLKVQLLVQAFESLSATGN.

Disordered regions lie at residues 1 to 31, 63 to 112, 280 to 329, and 378 to 414; these read MSNPMFPEKWEESSTSKSSRRVHKRRERKMW, TAES…SRIS, GPLG…GRSS, and HDHDDGKVDGTTSDGTVGDNEEVCREGSSGELREEDG. Residues 18-31 are compositionally biased toward basic residues; sequence SSRRVHKRRERKMW. Residues 76-86 are compositionally biased toward basic and acidic residues; it reads DDSRTYSKSSD. The span at 98–107 shows a compositional bias: basic residues; it reads SVKRRAKSKS. Positions 297 to 312 are enriched in acidic residues; that stretch reads DNVDGDSDEEVFEEEV. Calmodulin-binding regions lie at residues 493 to 592 and 831 to 938; these read TFHM…SLIP and NSLK…DIVL. 2 disordered regions span residues 816 to 844 and 941 to 971; these read IPDSSSDEESVSESSNSLKEEKEHQGETK and HDTPKQTKNSDTPRNNDETKEGKPRVEEGCE. Composition is skewed to basic and acidic residues over residues 833-844 and 954-971; these read LKEEKEHQGETK and RNNDETKEGKPRVEEGCE. Positions 1135 to 1229 are calmodulin-binding; the sequence is EKRVKGWNNV…SLLAQAFDTI (95 aa). 2 disordered regions span residues 1232-1252 and 1316-1340; these read QDMGSGSTPGSAASSRNISRQ and EKNQTLPEETRKEEEEEELKEDTSV. A compositionally biased stretch (low complexity) spans 1235–1252; that stretch reads GSGSTPGSAASSRNISRQ. Residues 1316 to 1328 are compositionally biased toward basic and acidic residues; that stretch reads EKNQTLPEETRKE. The interval 1379–1483 is calmodulin-binding; it reads RQKSETLQVS…QLLVQAFESL (105 aa).

Binds calmodulin in a calcium-dependent manner in vitro. May play a role in general plant defense including R gene-mediated responses. The protein is Calmodulin binding protein PICBP of Arabidopsis thaliana (Mouse-ear cress).